We begin with the raw amino-acid sequence, 314 residues long: ATP synthase gamma chain (314 aa).

It belongs to the ATPase gamma chain family. F-type ATPases have 2 components, CF(1) - the catalytic core - and CF(0) - the membrane proton channel. CF(1) has five subunits: alpha(3), beta(3), gamma(1), delta(1), epsilon(1). CF(0) has three main subunits: a, b and c.

It is found in the cell membrane. In terms of biological role, produces ATP from ADP in the presence of a proton gradient across the membrane. The gamma chain is believed to be important in regulating ATPase activity and the flow of protons through the CF(0) complex. In Limosilactobacillus reuteri (strain DSM 20016) (Lactobacillus reuteri), this protein is ATP synthase gamma chain.